A 405-amino-acid chain; its full sequence is uncharacterized protein (405 aa).

This is an uncharacterized protein from Equine herpesvirus 2 (strain 86/87) (EHV-2).